Here is a 630-residue protein sequence, read N- to C-terminus: 1-deoxy-D-xylulose-5-phosphate synthase (630 aa).

Thiamine diphosphate contacts are provided by residues His72 and 113–115 (GHS). Asp144 contacts Mg(2+). Residues 145–146 (GA), Asn173, Tyr284, and Glu367 contribute to the thiamine diphosphate site. Position 173 (Asn173) interacts with Mg(2+).

This sequence belongs to the transketolase family. DXPS subfamily. In terms of assembly, homodimer. It depends on Mg(2+) as a cofactor. Thiamine diphosphate is required as a cofactor.

It catalyses the reaction D-glyceraldehyde 3-phosphate + pyruvate + H(+) = 1-deoxy-D-xylulose 5-phosphate + CO2. Its pathway is metabolic intermediate biosynthesis; 1-deoxy-D-xylulose 5-phosphate biosynthesis; 1-deoxy-D-xylulose 5-phosphate from D-glyceraldehyde 3-phosphate and pyruvate: step 1/1. Catalyzes the acyloin condensation reaction between C atoms 2 and 3 of pyruvate and glyceraldehyde 3-phosphate to yield 1-deoxy-D-xylulose-5-phosphate (DXP). The sequence is that of 1-deoxy-D-xylulose-5-phosphate synthase from Bacillus cereus (strain B4264).